The chain runs to 73 residues: Beta-defensin 10 (73 aa).

Positions 1–23 are cleaved as a signal peptide; the sequence is MRTLCSLLLICCLLFSYTTPAVG. Disulfide bonds link C37–C66, C44–C59, and C49–C67.

The protein belongs to the beta-defensin family. In terms of tissue distribution, expressed in both adult and neonate brain, and very weakly in kidneys, epididymis, and testis.

It localises to the secreted. Its function is as follows. Has antibacterial activity. The polypeptide is Beta-defensin 10 (Defb10) (Mus musculus (Mouse)).